The primary structure comprises 362 residues: Manganese peroxidase 3 (362 aa).

Positions 1-18 (MAFKQLLTAISIVSVANA) are cleaved as a signal peptide. A propeptide spanning residues 19–23 (ALTRR) is cleaved from the precursor. Cystine bridges form between Cys26/Cys39, Cys38/Cys309, Cys58/Cys144, and Cys273/Cys338. 2 residues coordinate Mn(2+): Glu60 and Glu64. The Proton acceptor role is filled by His71. Residues Asp72, Gly90, Asp92, and Ser94 each coordinate Ca(2+). Asn126 is a glycosylation site (N-linked (GlcNAc...) asparagine). His200 contacts heme b. Ca(2+) is bound at residue Thr201. A Mn(2+)-binding site is contributed by Asp206. The Ca(2+) site is built by Asp218, Thr220, Ile223, and Asp225. The disordered stretch occupies residues 341–362 (TPFPSLSADPGPATSVAPVPPS).

Belongs to the peroxidase family. Ligninase subfamily. It depends on heme b as a cofactor. Ca(2+) is required as a cofactor.

The protein resides in the secreted. It catalyses the reaction 2 Mn(2+) + H2O2 + 2 H(+) = 2 Mn(3+) + 2 H2O. Catalyzes the oxidation of Mn(2+) to Mn(3+). The latter, acting as a diffusible redox mediator, is capable of oxidizing a variety of lignin compounds. This isozyme is also able to oxidize phenols and amines in the absence of Mn(2+), similar to versatile peroxidases. The chain is Manganese peroxidase 3 (mnp3) from Phlebia radiata (White-rot fungus).